The sequence spans 445 residues: MAAPEERELSQEQTEKLLQFQDLTGIESMDQCRQTLQQHNWNIEAAVQDRLNEQEGVPSVFNTTPNRPLQVNTADHRVYSYVVSRPQPRGLLGWGYYLIMLPFRITYYTLLDIFRFAVRFIRPDPRSRVTDPVGDVVSFIQLFEEKYGRIHPVFYQGTYSQALNDAKQELRFLLVYLHGEDHQDSDDFCRNTLCIPEVTNFLNSRMLFWACSTNKPEGFRVSQALRENTYPFLAMIMLKDRRMTVVGRLEGLIQPQDLINQLTFIVEANQTYLVSERLEREERNQTQVLRQQQDEAYLASLRADQEKERKKKEKQEQKRREEEEAQLKQMLEERKKRNLEEEKERKSECLPAEPVPDHPDNVKIIFKMPNGTRVERRFLFTQSLSVIHDFLFSLKETPEKFQIVTNFPRRVLPCLPSEEIPVPPTLQEAGLSQSQLLFVQDLTDD.

Residues 12–53 enclose the UBA domain; the sequence is EQTEKLLQFQDLTGIESMDQCRQTLQQHNWNIEAAVQDRLNE. A coiled-coil region spans residues 275-353; it reads SERLEREERN…ERKSECLPAE (79 aa). The segment covering 303–348 has biased composition (basic and acidic residues); it reads ADQEKERKKKEKQEQKRREEEEAQLKQMLEERKKRNLEEEKERKSE. Residues 303–354 are disordered; sequence ADQEKERKKKEKQEQKRREEEEAQLKQMLEERKKRNLEEEKERKSECLPAEP. Positions 357–439 constitute a UBX domain; sequence DHPDNVKIIF…GLSQSQLLFV (83 aa).

Its subcellular location is the cytoplasm. It is found in the lipid droplet. The protein resides in the endoplasmic reticulum. In terms of biological role, plays an important role in endoplasmic reticulum-associated degradation (ERAD) that mediates ubiquitin-dependent degradation of misfolded endoplasmic reticulum proteins. Involved in inhibition of lipid droplet degradation. Involved in stress granule disassembly. The sequence is that of FAS-associated factor 2 (faf2) from Xenopus tropicalis (Western clawed frog).